Reading from the N-terminus, the 182-residue chain is Ribosome-recycling factor (182 aa).

Belongs to the RRF family.

The protein localises to the cytoplasm. Functionally, responsible for the release of ribosomes from messenger RNA at the termination of protein biosynthesis. May increase the efficiency of translation by recycling ribosomes from one round of translation to another. This chain is Ribosome-recycling factor, found in Parasynechococcus marenigrum (strain WH8102).